We begin with the raw amino-acid sequence, 125 residues long: Large ribosomal subunit protein bL12 (125 aa).

A disordered region spans residues 96 to 125 (PAPVKEGATKDEAEEIKKKIEEAGGTAELK). A compositionally biased stretch (basic and acidic residues) spans 102 to 117 (GATKDEAEEIKKKIEE).

It belongs to the bacterial ribosomal protein bL12 family. Homodimer. Part of the ribosomal stalk of the 50S ribosomal subunit. Forms a multimeric L10(L12)X complex, where L10 forms an elongated spine to which 2 to 4 L12 dimers bind in a sequential fashion. Binds GTP-bound translation factors.

Forms part of the ribosomal stalk which helps the ribosome interact with GTP-bound translation factors. Is thus essential for accurate translation. The protein is Large ribosomal subunit protein bL12 of Alcanivorax borkumensis (strain ATCC 700651 / DSM 11573 / NCIMB 13689 / SK2).